The chain runs to 321 residues: Putative sulfotransferase vep-2 (321 aa).

Residues 11-31 (IARVLIIIASISVICITLFIS) form a helical membrane-spanning segment.

To C.elegans C41C4.1 and C18B2.2.

The protein localises to the membrane. The protein is Putative sulfotransferase vep-2 of Caenorhabditis elegans.